Here is a 433-residue protein sequence, read N- to C-terminus: Enolase (433 aa).

Residue glutamine 166 coordinates (2R)-2-phosphoglycerate. Glutamate 208 serves as the catalytic Proton donor. Aspartate 245, glutamate 289, and aspartate 316 together coordinate Mg(2+). Residues lysine 341, arginine 370, serine 371, and lysine 392 each coordinate (2R)-2-phosphoglycerate. The Proton acceptor role is filled by lysine 341.

This sequence belongs to the enolase family. The cofactor is Mg(2+).

It is found in the cytoplasm. It localises to the secreted. Its subcellular location is the cell surface. The enzyme catalyses (2R)-2-phosphoglycerate = phosphoenolpyruvate + H2O. The protein operates within carbohydrate degradation; glycolysis; pyruvate from D-glyceraldehyde 3-phosphate: step 4/5. Catalyzes the reversible conversion of 2-phosphoglycerate (2-PG) into phosphoenolpyruvate (PEP). It is essential for the degradation of carbohydrates via glycolysis. This is Enolase from Acetivibrio thermocellus (strain ATCC 27405 / DSM 1237 / JCM 9322 / NBRC 103400 / NCIMB 10682 / NRRL B-4536 / VPI 7372) (Clostridium thermocellum).